The primary structure comprises 510 residues: Bone morphogenetic protein 6 (510 aa).

A signal peptide spans 1-20 (MPGLGRRAQWLCWWWGLLCS). The propeptide occupies 21-371 (CGPPPLRPPL…VSEVHVRTTR (351 aa)). Disordered stretches follow at residues 87–129 (PHRP…RLKS) and 143–199 (NDDE…PLTS). The segment covering 106–116 (PQQQQQQQQQQ) has biased composition (low complexity). Asn-238, Asn-266, Asn-383, Asn-401, and Asn-451 each carry an N-linked (GlcNAc...) asparagine glycan. The interval 370–402 (TRSASSRRRQQSRNRSTQSQDVSRGSGSSDYNG) is disordered. The segment covering 390–401 (DVSRGSGSSDYN) has biased composition (polar residues). Intrachain disulfides connect Cys-409–Cys-475, Cys-438–Cys-507, and Cys-442–Cys-509.

Belongs to the TGF-beta family. Interacts with SOSTDC1. Interacts (when glycosylated) with type I receptor ACVR1; the interaction may induce HAMP expression. Interacts with type II receptor ACVR2B. Interacts with Hemojuvelin/HJV. Interacts with ERFE; the interaction inhibits BMP-induced transcription of HAMP. Interacts with BMPR1A/ALK3. Forms heterodimers with BMP2 in vitro; the heterodimer then binds to its receptor BMPR1A /ALK3 and may induce HAMP expression. In terms of tissue distribution, expressed in the lung. Low levels seen in the kidney.

Its subcellular location is the secreted. Growth factor of the TGF-beta superfamily that plays essential roles in many developmental processes including cartilage and bone formation. Also plays an important role in the regulation of HAMP/hepcidin expression and iron metabolism by acting as a ligand for hemojuvelin/HJV. Also acts to promote expression of HAMP, potentially via the interaction with its receptor BMPR1A/ALK3. Initiates the canonical BMP signaling cascade by associating with type I receptor ACVR1 and type II receptor ACVR2B. In turn, ACVR1 propagates signal by phosphorylating SMAD1/5/8 that travel to the nucleus and act as activators and repressors of transcription of target. Can also signal through non-canonical pathway such as TAZ-Hippo signaling cascade to modulate VEGF signaling by regulating VEGFR2 expression. This is Bone morphogenetic protein 6 (Bmp6) from Mus musculus (Mouse).